The chain runs to 264 residues: MVKSHIGSWILVLFVAMWSDVGLCKKRPKPGGGWNTGGSRYPGQGSPGGNRYPPQGGGGWGQPHGGGWGQPHGGGWGQPHGGGWGQPHGGGWGQPHGGGGWGQGGTHGQWNKPSKPKTNMKHVAGAAAAGAVVGGLGGYMLGSAMSRPLIHFGSDYEDRYYRENMHRYPNQVYYRPVDQYSNQNNFVHDCVNITVKEHTVTTTTKGENFTETDIKMMERVVEQMCITQYQRESQAYYQRGASVILFSSPPVILLISFLIFLIVG.

The N-terminal stretch at methionine 1–cysteine 24 is a signal peptide. Positions lysine 25–tyrosine 41 are interaction with ADGRG6. The tract at residues lysine 25–alanine 241 is interaction with GRB2, ERI3 and SYN1. The disordered stretch occupies residues proline 28–asparagine 119. Repeat copies occupy residues proline 54–glutamine 62, proline 63–glutamine 70, proline 71–glutamine 78, proline 79–glutamine 86, proline 87–glutamine 94, and proline 95–glutamine 103. The interval proline 54–glutamine 103 is 6 X 8 AA tandem repeats of P-H-G-G-G-W-G-Q. Residues glutamine 55–histidine 107 are compositionally biased toward gly residues. Residues histidine 72, glycine 73, glycine 74, histidine 80, glycine 81, glycine 82, histidine 88, glycine 89, glycine 90, histidine 96, glycine 98, and glycine 99 each contribute to the Cu(2+) site. Cysteines 190 and 225 form a disulfide. N-linked (GlcNAc...) asparagine glycosylation is found at asparagine 192 and asparagine 208. The GPI-anchor amidated alanine moiety is linked to residue alanine 241. Residues serine 242 to glycine 264 constitute a propeptide, removed in mature form.

The protein belongs to the prion family. As to quaternary structure, monomer and homodimer. Has a tendency to aggregate into amyloid fibrils containing a cross-beta spine, formed by a steric zipper of superposed beta-strands. Soluble oligomers may represent an intermediate stage on the path to fibril formation. Copper binding may promote oligomerization. Interacts with GRB2, APP, ERI3/PRNPIP and SYN1. Mislocalized cytosolically exposed PrP interacts with MGRN1; this interaction alters MGRN1 subcellular location and causes lysosomal enlargement. Interacts with APP. Interacts with KIAA1191. Interacts with ADGRG6.

The protein resides in the cell membrane. The protein localises to the golgi apparatus. Functionally, its primary physiological function is unclear. May play a role in neuronal development and synaptic plasticity. May be required for neuronal myelin sheath maintenance. May promote myelin homeostasis through acting as an agonist for ADGRG6 receptor. May play a role in iron uptake and iron homeostasis. Soluble oligomers are toxic to cultured neuroblastoma cells and induce apoptosis (in vitro). Association with GPC1 (via its heparan sulfate chains) targets PRNP to lipid rafts. Also provides Cu(2+) or Zn(2+) for the ascorbate-mediated GPC1 deaminase degradation of its heparan sulfate side chains. This is Major prion protein (PRNP) from Bos indicus x Bos taurus (Hybrid cattle).